We begin with the raw amino-acid sequence, 171 residues long: uncharacterized protein (171 aa).

This sequence to A.aeolicus aq_616.

This is an uncharacterized protein from Aquifex aeolicus (strain VF5).